We begin with the raw amino-acid sequence, 91 residues long: Small ribosomal subunit protein bS16 (91 aa).

This sequence belongs to the bacterial ribosomal protein bS16 family.

In Latilactobacillus sakei subsp. sakei (strain 23K) (Lactobacillus sakei subsp. sakei), this protein is Small ribosomal subunit protein bS16.